Consider the following 822-residue polypeptide: Dimethyl sulfoxide/trimethylamine N-oxide reductase (822 aa).

A signal peptide (tat-type signal) is located at residues 1–42 (MTKLSGQELHAELSRRAFLSYTAAVGALGLCGTSLLAQGARA). Residues W158, 158–160 (WKS), S189, 232–233 (KT), 262–263 (IN), 283–285 (QTD), 364–365 (WS), R368, N476, H480, 500–501 (QD), R523, D553, 683–686 (ASHP), R689, 691–693 (HSQ), N779, and 796–797 (GQ) each bind Mo-bis(molybdopterin guanine dinucleotide).

The protein belongs to the prokaryotic molybdopterin-containing oxidoreductase family. Homodimer. Mo-bis(molybdopterin guanine dinucleotide) serves as cofactor. In terms of processing, predicted to be exported by the Tat system. The position of the signal peptide cleavage has been experimentally proven.

Its subcellular location is the periplasm. The enzyme catalyses dimethyl sulfide + a menaquinone + H2O = dimethyl sulfoxide + a menaquinol. The catalysed reaction is trimethylamine + 2 Fe(III)-[cytochrome c] + H2O = trimethylamine N-oxide + 2 Fe(II)-[cytochrome c] + 3 H(+). Functionally, catalyzes the reduction of dimethyl sulfoxide (DMSO) and trimethylamine N-oxide (TMAO) to dimethyl sulfide (DMS) and trimethylamine, respectively. The terminal DMSO reductase can also use various sulfoxides and N-oxide compounds as terminal electron acceptor in addition to DMSO and TMAO. The polypeptide is Dimethyl sulfoxide/trimethylamine N-oxide reductase (dmsA) (Cereibacter sphaeroides (Rhodobacter sphaeroides)).